The sequence spans 129 residues: uncharacterized protein (129 aa).

A disordered region spans residues 34-57 (SAPLRPPRELHAAPPPATPTQTVV).

This is an uncharacterized protein from Homo sapiens (Human).